The following is a 580-amino-acid chain: CDKN2A-interacting protein (580 aa).

A2 carries the post-translational modification N-acetylalanine. The region spanning 19-133 (VEALRCDGET…KVKKRGISSS (115 aa)) is the XRN2-binding (XTBD) domain. A disordered region spans residues 129 to 356 (GISSSNEGVE…PKSSSSTNTS (228 aa)). Position 131 is a phosphoserine (S131). Basic and acidic residues predominate over residues 155 to 167 (EQDHAKTSAKTER). Positions 168 to 179 (ASAQQENSSTCI) are enriched in polar residues. K184 participates in a covalent cross-link: Glycyl lysine isopeptide (Lys-Gly) (interchain with G-Cter in SUMO1). A compositionally biased stretch (low complexity) spans 185–228 (SESGNSARSSGISSQNSSTSDGDRSVSSQSSSSVSSQVTTAGSG). Residues 231–240 (SEAEAPDKHG) are compositionally biased toward basic and acidic residues. The residue at position 241 (S241) is a Phosphoserine. The segment covering 248–269 (LKSSVNSHMTQSTDSRQQSGSP) has biased composition (polar residues). Low complexity-rich tracts occupy residues 274 to 313 (LEGS…PSSE) and 321 to 356 (SKTS…TNTS). T346 is modified (phosphothreonine). A Phosphoserine modification is found at S389. Positions 462-537 (NHGELLNAAI…SREALKLFLK (76 aa)) constitute a DRBM domain.

This sequence belongs to the CARF family. Interacts with CDKN2A/p14ARF, p53/TP53 and MDM2. Interacts with CHEK2 and MAPK3. Interacts with XRN2. May be ubiquitinated. Ubiquitously expressed.

The protein resides in the nucleus. It localises to the nucleoplasm. Functionally, regulates DNA damage response in a dose-dependent manner through a number of signaling pathways involved in cell proliferation, apoptosis and senescence. The chain is CDKN2A-interacting protein (CDKN2AIP) from Homo sapiens (Human).